The primary structure comprises 211 residues: tRNA (guanine-N(7)-)-methyltransferase (211 aa).

S-adenosyl-L-methionine-binding residues include glutamate 44, aspartate 69, aspartate 96, and aspartate 118. Aspartate 118 is an active-site residue. Residue lysine 122 coordinates substrate. Residues 124–129 (RHEKRR) are interaction with RNA. Residues aspartate 154 and 191 to 194 (TEYE) each bind substrate.

Belongs to the class I-like SAM-binding methyltransferase superfamily. TrmB family.

It catalyses the reaction guanosine(46) in tRNA + S-adenosyl-L-methionine = N(7)-methylguanosine(46) in tRNA + S-adenosyl-L-homocysteine. The protein operates within tRNA modification; N(7)-methylguanine-tRNA biosynthesis. Catalyzes the formation of N(7)-methylguanine at position 46 (m7G46) in tRNA. The chain is tRNA (guanine-N(7)-)-methyltransferase from Streptococcus mutans serotype c (strain ATCC 700610 / UA159).